We begin with the raw amino-acid sequence, 182 residues long: Kappa-casein (182 aa).

A signal peptide spans 1–20 (MKSFLLVVNALALTLPFLAV). 4 O-linked (GalNAc...) threonine glycosylation sites follow: threonine 133, threonine 143, threonine 148, and threonine 151. Threonine 157 is subject to Phosphothreonine; alternate. A glycan (O-linked (GalNAc...) threonine; alternate) is linked at threonine 157. 3 O-linked (GalNAc...) threonine glycosylation sites follow: threonine 167, threonine 169, and threonine 178.

Belongs to the kappa-casein family. Heteromultimers composed of alpha-s1 casein and kappa casein linked by disulfide bonds. The N-terminus is blocked. In terms of tissue distribution, mammary gland specific. Secreted in milk.

It is found in the secreted. Kappa-casein stabilizes micelle formation, preventing casein precipitation in milk. The protein is Kappa-casein (CSN3) of Homo sapiens (Human).